We begin with the raw amino-acid sequence, 192 residues long: Imidazole glycerol phosphate synthase subunit HisH (192 aa).

Residues 1 to 192 form the Glutamine amidotransferase type-1 domain; it reads MIVIVDYGLG…QAIQGGFIND (192 aa). The active-site Nucleophile is Cys77. Active-site residues include His169 and Glu171.

Heterodimer of HisH and HisF.

The protein resides in the cytoplasm. It catalyses the reaction 5-[(5-phospho-1-deoxy-D-ribulos-1-ylimino)methylamino]-1-(5-phospho-beta-D-ribosyl)imidazole-4-carboxamide + L-glutamine = D-erythro-1-(imidazol-4-yl)glycerol 3-phosphate + 5-amino-1-(5-phospho-beta-D-ribosyl)imidazole-4-carboxamide + L-glutamate + H(+). The enzyme catalyses L-glutamine + H2O = L-glutamate + NH4(+). The protein operates within amino-acid biosynthesis; L-histidine biosynthesis; L-histidine from 5-phospho-alpha-D-ribose 1-diphosphate: step 5/9. Functionally, IGPS catalyzes the conversion of PRFAR and glutamine to IGP, AICAR and glutamate. The HisH subunit catalyzes the hydrolysis of glutamine to glutamate and ammonia as part of the synthesis of IGP and AICAR. The resulting ammonia molecule is channeled to the active site of HisF. This is Imidazole glycerol phosphate synthase subunit HisH from Staphylococcus aureus (strain bovine RF122 / ET3-1).